The chain runs to 264 residues: Acyl-[acyl-carrier-protein]--UDP-N-acetylglucosamine O-acyltransferase (264 aa).

This sequence belongs to the transferase hexapeptide repeat family. LpxA subfamily. In terms of assembly, homotrimer.

The protein resides in the cytoplasm. The enzyme catalyses a (3R)-hydroxyacyl-[ACP] + UDP-N-acetyl-alpha-D-glucosamine = a UDP-3-O-[(3R)-3-hydroxyacyl]-N-acetyl-alpha-D-glucosamine + holo-[ACP]. The protein operates within glycolipid biosynthesis; lipid IV(A) biosynthesis; lipid IV(A) from (3R)-3-hydroxytetradecanoyl-[acyl-carrier-protein] and UDP-N-acetyl-alpha-D-glucosamine: step 1/6. Its function is as follows. Involved in the biosynthesis of lipid A, a phosphorylated glycolipid that anchors the lipopolysaccharide to the outer membrane of the cell. The sequence is that of Acyl-[acyl-carrier-protein]--UDP-N-acetylglucosamine O-acyltransferase from Rickettsia canadensis (strain McKiel).